Reading from the N-terminus, the 477-residue chain is Glycogen synthase (477 aa).

An ADP-alpha-D-glucose-binding site is contributed by K15.

The protein belongs to the glycosyltransferase 1 family. Bacterial/plant glycogen synthase subfamily.

The enzyme catalyses [(1-&gt;4)-alpha-D-glucosyl](n) + ADP-alpha-D-glucose = [(1-&gt;4)-alpha-D-glucosyl](n+1) + ADP + H(+). It functions in the pathway glycan biosynthesis; glycogen biosynthesis. Synthesizes alpha-1,4-glucan chains using ADP-glucose. In Shigella boydii serotype 4 (strain Sb227), this protein is Glycogen synthase.